The following is a 1183-amino-acid chain: Translation initiation factor IF-2 (1183 aa).

2 disordered regions span residues 55–512 (KSKT…KVHI) and 538–574 (ASLA…RQRR). The segment covering 83–99 (TQKDQKTEPKKKNHDQT) has biased composition (basic and acidic residues). Polar residues-rich tracts occupy residues 100 to 143 (ELSQ…QITA) and 165 to 177 (KPLT…IPQS). Residues 220–229 (PKIDIQDKKP) are compositionally biased toward basic and acidic residues. The segment covering 231–252 (QPNNQKAKTRINQGEISPQKVG) has biased composition (polar residues). The segment covering 253 to 267 (QGNIQKIKSQNKQNQ) has biased composition (low complexity). The segment covering 288 to 304 (IRREKPVNKPHTNEVRN) has biased composition (basic and acidic residues). 2 stretches are compositionally biased toward polar residues: residues 324 to 349 (QGLS…NRQG) and 357 to 367 (NRTTQGQNRPG). Basic and acidic residues predominate over residues 485–499 (GRPDWDDSAKLDALR). Basic residues-rich tracts occupy residues 544 to 553 (SKPKVGKRNN) and 560 to 574 (LKKR…RQRR). Residues 675-847 (RRPPVVTVMG…VLLVTEVEDL (173 aa)) enclose the tr-type G domain. The segment at 684 to 691 (GHVDHGKT) is G1. 684–691 (GHVDHGKT) is a binding site for GTP. Residues 709–713 (GITQH) are G2. The interval 734–737 (DTPG) is G3. GTP contacts are provided by residues 734 to 738 (DTPGH) and 788 to 791 (NKID). A G4 region spans residues 788 to 791 (NKID). The interval 824–826 (SAI) is G5.

Belongs to the TRAFAC class translation factor GTPase superfamily. Classic translation factor GTPase family. IF-2 subfamily.

The protein localises to the cytoplasm. One of the essential components for the initiation of protein synthesis. Protects formylmethionyl-tRNA from spontaneous hydrolysis and promotes its binding to the 30S ribosomal subunits. Also involved in the hydrolysis of GTP during the formation of the 70S ribosomal complex. The protein is Translation initiation factor IF-2 of Prochlorococcus marinus (strain NATL1A).